We begin with the raw amino-acid sequence, 294 residues long: 4-hydroxy-tetrahydrodipicolinate synthase (294 aa).

Residue serine 47 participates in pyruvate binding. Catalysis depends on tyrosine 135, which acts as the Proton donor/acceptor. Residue lysine 163 is the Schiff-base intermediate with substrate of the active site. Residue isoleucine 205 participates in pyruvate binding.

This sequence belongs to the DapA family. Homotetramer; dimer of dimers.

Its subcellular location is the cytoplasm. It carries out the reaction L-aspartate 4-semialdehyde + pyruvate = (2S,4S)-4-hydroxy-2,3,4,5-tetrahydrodipicolinate + H2O + H(+). It participates in amino-acid biosynthesis; L-lysine biosynthesis via DAP pathway; (S)-tetrahydrodipicolinate from L-aspartate: step 3/4. In terms of biological role, catalyzes the condensation of (S)-aspartate-beta-semialdehyde [(S)-ASA] and pyruvate to 4-hydroxy-tetrahydrodipicolinate (HTPA). This chain is 4-hydroxy-tetrahydrodipicolinate synthase, found in Ralstonia nicotianae (strain ATCC BAA-1114 / GMI1000) (Ralstonia solanacearum).